The sequence spans 311 residues: Long form salivary protein D7L1 (311 aa).

An N-terminal signal peptide occupies residues 1–21 (MIVTGVLLFILLELFAQGSQA). 4 cysteine pairs are disulfide-bonded: Cys37–Cys73, Cys69–Cys128, Cys178–Cys211, and Cys252–Cys263.

Belongs to the PBP/GOBP family.

The protein localises to the secreted. Modulates blood feeding of female mosquitoes on vertebrate species by binding and sequestering different mediators involved in the host response. Binds leukotriene C4 and U-46619, a stable analog of thromboxane A2. Inhibits agonist-induced platelet aggregation. Exhibits vasodilating activity. The sequence is that of Long form salivary protein D7L1 from Anopheles gambiae (African malaria mosquito).